The sequence spans 201 residues: Putative ferritin heavy polypeptide-like 19 (201 aa).

In terms of domain architecture, Ferritin-like diiron spans 1-123 (MAFYFDQDDA…GYLSNLHKMG (123 aa)).

The protein belongs to the ferritin family.

The polypeptide is Putative ferritin heavy polypeptide-like 19 (FTH1P19) (Homo sapiens (Human)).